A 573-amino-acid chain; its full sequence is Lauric acid 10-hydroxylase (573 aa).

2 consecutive transmembrane segments (helical) span residues Y3 to L23 and L298 to F318. C516 is a binding site for heme.

The protein belongs to the cytochrome P450 family. The cofactor is heme. As to expression, mostly expressed in flowers and leaves and, at low levels, in roots and stems.

Its subcellular location is the endoplasmic reticulum membrane. It carries out the reaction an omega-methyl-medium-chain fatty acid + reduced [NADPH--hemoprotein reductase] + O2 = an omega-hydroxy-medium-chain fatty acid + oxidized [NADPH--hemoprotein reductase] + H2O + H(+). The catalysed reaction is decanoate + reduced [NADPH--hemoprotein reductase] + O2 = 10-hydroxydecanoate + oxidized [NADPH--hemoprotein reductase] + H2O + H(+). It catalyses the reaction dodecanoate + reduced [NADPH--hemoprotein reductase] + O2 = 12-hydroxydodecanoate + oxidized [NADPH--hemoprotein reductase] + H2O + H(+). It functions in the pathway lipid metabolism; fatty acid metabolism. Its function is as follows. Cytochrome P450 hydroxylase catalyzing the conversion of decanoate (capric acid) and dodecanoate (lauric acid) to their corresponding omega-hydroxy metabolites, 10-hydroxydecanoate and 12-hydroxydodecanoate, respectively; these hydroxylated components affect plant growth, including reducing root elongation. The sequence is that of Lauric acid 10-hydroxylase from Petunia hybrida (Petunia).